A 443-amino-acid chain; its full sequence is Xaa-Pro dipeptidase (443 aa).

Residues D244, D255, H336, E381, and E420 each contribute to the Mn(2+) site.

The protein belongs to the peptidase M24B family. Bacterial-type prolidase subfamily. Mn(2+) is required as a cofactor.

The enzyme catalyses Xaa-L-Pro dipeptide + H2O = an L-alpha-amino acid + L-proline. Functionally, splits dipeptides with a prolyl residue in the C-terminal position. This chain is Xaa-Pro dipeptidase, found in Stenotrophomonas maltophilia (strain R551-3).